The primary structure comprises 117 residues: Large ribosomal subunit protein uL18 (117 aa).

It belongs to the universal ribosomal protein uL18 family. Part of the 50S ribosomal subunit; part of the 5S rRNA/L5/L18/L25 subcomplex. Contacts the 5S and 23S rRNAs.

This is one of the proteins that bind and probably mediate the attachment of the 5S RNA into the large ribosomal subunit, where it forms part of the central protuberance. This is Large ribosomal subunit protein uL18 from Aliivibrio fischeri (strain ATCC 700601 / ES114) (Vibrio fischeri).